We begin with the raw amino-acid sequence, 381 residues long: E3 ubiquitin-protein ligase Fancl (381 aa).

A UBC-RWD region (URD) region spans residues 110-293 (NIYYDILALY…MFDLCYFPMP (184 aa)). The RING-CH-type; degenerate zinc finger occupies 303 to 374 (EEDNEELRCN…PFCKAKLSTS (72 aa)). Residues C311, C314, C329, C334, H339, C342, C364, and C367 each contribute to the Zn(2+) site.

As to quaternary structure, interacts (via C-terminus) with FANCI and Fancd2.

Its subcellular location is the nucleus. The enzyme catalyses S-ubiquitinyl-[E2 ubiquitin-conjugating enzyme]-L-cysteine + [acceptor protein]-L-lysine = [E2 ubiquitin-conjugating enzyme]-L-cysteine + N(6)-ubiquitinyl-[acceptor protein]-L-lysine.. Its pathway is protein modification; protein ubiquitination. Functionally, ubiquitin ligase protein that mediates monoubiquitination of Fancd2. Ubiquitination of Fancd2 is stimulated by ionising radiation. Together with Fancd2, and probably FANCI, involved in DNA repair of damage caused by agents that induce interstrand cross-links but not agents that cause double strand breaks. The chain is E3 ubiquitin-protein ligase Fancl from Drosophila melanogaster (Fruit fly).